The sequence spans 874 residues: Alanine--tRNA ligase (874 aa).

4 residues coordinate Zn(2+): His562, His566, Cys664, and His668.

The protein belongs to the class-II aminoacyl-tRNA synthetase family. Requires Zn(2+) as cofactor.

It localises to the cytoplasm. The catalysed reaction is tRNA(Ala) + L-alanine + ATP = L-alanyl-tRNA(Ala) + AMP + diphosphate. Catalyzes the attachment of alanine to tRNA(Ala) in a two-step reaction: alanine is first activated by ATP to form Ala-AMP and then transferred to the acceptor end of tRNA(Ala). Also edits incorrectly charged Ser-tRNA(Ala) and Gly-tRNA(Ala) via its editing domain. The protein is Alanine--tRNA ligase of Shewanella denitrificans (strain OS217 / ATCC BAA-1090 / DSM 15013).